We begin with the raw amino-acid sequence, 210 residues long: Putative odorant-binding protein A5 (210 aa).

The first 19 residues, 1 to 19, serve as a signal peptide directing secretion; that stretch reads MKLPALHLLFLGFICLARS.

It belongs to the phosphatidylethanolamine-binding protein family. As to expression, cells at the bases of a few scattered sensilla on the posterior surface of the antenna.

The protein resides in the secreted. This Drosophila melanogaster (Fruit fly) protein is Putative odorant-binding protein A5 (a5).